A 226-amino-acid polypeptide reads, in one-letter code: Ribosomal RNA large subunit methyltransferase E (226 aa).

The S-adenosyl-L-methionine site is built by glycine 82, tryptophan 84, aspartate 100, aspartate 116, and aspartate 140. The Proton acceptor role is filled by lysine 180.

The protein belongs to the class I-like SAM-binding methyltransferase superfamily. RNA methyltransferase RlmE family.

Its subcellular location is the cytoplasm. The enzyme catalyses uridine(2552) in 23S rRNA + S-adenosyl-L-methionine = 2'-O-methyluridine(2552) in 23S rRNA + S-adenosyl-L-homocysteine + H(+). Its function is as follows. Specifically methylates the uridine in position 2552 of 23S rRNA at the 2'-O position of the ribose in the fully assembled 50S ribosomal subunit. This chain is Ribosomal RNA large subunit methyltransferase E, found in Caulobacter sp. (strain K31).